A 799-amino-acid chain; its full sequence is Sodium- and chloride-dependent glycine transporter 2 (799 aa).

The segment at 1-64 is disordered; sequence MDCSAPKEMN…RSASTGAQTF (64 aa). At 1–201 the chain is on the cytoplasmic side; sequence MDCSAPKEMN…ARGNWSSKLD (201 aa). Low complexity predominate over residues 40 to 57; it reads PAAAPAAAVQPPRVPRSA. S58 bears the Phosphoserine mark. Residue T59 is modified to Phosphothreonine. S86 is modified (phosphoserine). 3 helical membrane passes run 202-222, 230-249, and 273-293; these read FILSMVGYAVGLGNVWRFPYL, AFLIPYLMMLALAGLPIFFL, and GCGIAMLIISVLIAIYYNVII. Na(+)-binding residues include G208, A210, V211, and N215. The Extracellular portion of the chain corresponds to 294–395; it reads CYTLFYLFAS…AGIEYPGEIR (102 aa). The cysteines at positions 313 and 322 are disulfide-linked. N-linked (GlcNAc...) asparagine glycosylation is found at N345, N355, N360, and N366. Helical transmembrane passes span 396–414, 423–440, 476–493, 505–526, and 559–578; these read WPLAFCLFLAWVIVYASLA, VVYFTATFPYVVLVILLI, IFFSLSAAWGGLITLSSY, LIVTCTNSATSIFAGFVIFSVI, and LPLSPFWAIIFFLMLLTLGL. Na(+) contacts are provided by S479, N511, L576, and D579. 4 helical membrane passes run 606-624, 640-660, 681-700, and 719-737; these read VFTLGCCICFFIMGFPMIT, SYALVIIAIFELVGISYVYGL, VCWAFVTPTILTFILCFSFY, and LGWLMLACSVIWIPIMFVI. At 738 to 799 the chain is on the cytoplasmic side; sequence KMYLAPGRFI…VKDLELGTQC (62 aa).

Belongs to the sodium:neurotransmitter symporter (SNF) (TC 2.A.22) family. SLC6A5 subfamily. Post-translationally, N-glycosylated. Specifically expressed in spinal cord, brain stem, and to a lesser extent in the cerebellum.

It is found in the cell membrane. The enzyme catalyses glycine(out) + chloride(out) + 3 Na(+)(out) = glycine(in) + chloride(in) + 3 Na(+)(in). Functionally, sodium- and chloride-dependent glycine transporter. Terminates the action of glycine by its high affinity sodium-dependent reuptake into presynaptic terminals. May be responsible for the termination of neurotransmission at strychnine-sensitive glycinergic synapses. This Rattus norvegicus (Rat) protein is Sodium- and chloride-dependent glycine transporter 2 (Slc6a5).